Reading from the N-terminus, the 209-residue chain is Large ribosomal subunit protein uL3 (209 aa).

The disordered stretch occupies residues 132-153 (ATHGNSLSHRVPGSIGQNQTPG). An N5-methylglutamine modification is found at Q150.

This sequence belongs to the universal ribosomal protein uL3 family. In terms of assembly, part of the 50S ribosomal subunit. Forms a cluster with proteins L14 and L19. In terms of processing, methylated by PrmB.

Functionally, one of the primary rRNA binding proteins, it binds directly near the 3'-end of the 23S rRNA, where it nucleates assembly of the 50S subunit. The protein is Large ribosomal subunit protein uL3 of Enterobacter sp. (strain 638).